We begin with the raw amino-acid sequence, 482 residues long: 3-isopropylmalate dehydratase large subunit (482 aa).

The interval 60–79 is disordered; that stretch reads ATPDHNVPTTRAERQGGLES. Cys-353, Cys-414, and Cys-417 together coordinate [4Fe-4S] cluster.

This sequence belongs to the aconitase/IPM isomerase family. LeuC type 1 subfamily. As to quaternary structure, heterodimer of LeuC and LeuD. The cofactor is [4Fe-4S] cluster.

The enzyme catalyses (2R,3S)-3-isopropylmalate = (2S)-2-isopropylmalate. It functions in the pathway amino-acid biosynthesis; L-leucine biosynthesis; L-leucine from 3-methyl-2-oxobutanoate: step 2/4. Its function is as follows. Catalyzes the isomerization between 2-isopropylmalate and 3-isopropylmalate, via the formation of 2-isopropylmaleate. The sequence is that of 3-isopropylmalate dehydratase large subunit from Xanthomonas euvesicatoria pv. vesicatoria (strain 85-10) (Xanthomonas campestris pv. vesicatoria).